The primary structure comprises 350 residues: Induced myeloid leukemia cell differentiation protein Mcl-1 homolog (350 aa).

Glycyl lysine isopeptide (Lys-Gly) (interchain with G-Cter in ubiquitin) cross-links involve residues lysine 5 and lysine 40. The interval 104 to 175 is PEST-like; the sequence is CASPPEEMEG…PAEEEEDELF (72 aa). Serine 121 carries the phosphoserine modification. A Glycyl lysine isopeptide (Lys-Gly) (interchain with G-Cter in ubiquitin) cross-link involves residue lysine 136. Residues 148 to 170 are disordered; it reads GEASSGPGTDGSLPSTPPPAEEE. Residue serine 159 is modified to Phosphoserine; by GSK3-alpha and GSK3-beta. Phosphoserine is present on serine 162. Position 163 is a phosphothreonine; by MAPK (threonine 163). Residues lysine 194 and lysine 197 each participate in a glycyl lysine isopeptide (Lys-Gly) (interchain with G-Cter in ubiquitin) cross-link. The short motif at 209-223 is the BH3 element; it reads ALETLRRVGDGVQRN. Residues 252-272 carry the BH1 motif; that stretch reads HVFSDGVTNWGRIVTLISFGA. The BH2 signature appears at 304–319; it reads DWLVKQRGWDGFVEFF. A helical transmembrane segment spans residues 328–348; that stretch reads IRNVLLAFAGVAGVGAGLAYL.

It belongs to the Bcl-2 family. Interacts with HIF3A (via C-terminus domain). Interacts with BOK, BIK, BAX, BAK1, and TPT1. Interacts with unphosphorylated BAD. Interacts with BMF, BBC3 and PMAIP1. Interacts with BOP. Interacts with BCL2L11; may sequester BCL2L11 to prevent its pro-apoptotic activity. Interacts with GIMAP5 and HSPA8/HSC70; the interaction between HSPA8 and MCL1 is impaired in the absence of GIMAP5. Cleaved by CASP3 during apoptosis, yielding a pro-apoptotic C-terminal fragment. Post-translationally, rapidly degraded in the absence of phosphorylation in the PEST region. In terms of processing, phosphorylated on Ser-159, by GSK3, in response to IL3/interleukin-3 withdrawal. Phosphorylation at Ser-159 induces ubiquitination and proteasomal degradation, abrogating the anti-apoptotic activity. Treatment with taxol or okadaic acid induces phosphorylation on additional sites. Ubiquitinated. Ubiquitination is induced by phosphorylation at Ser-159. Deubiquitinated by USP20; leading to increased stability.

The protein resides in the membrane. It localises to the cytoplasm. It is found in the mitochondrion. Its subcellular location is the nucleus. The protein localises to the nucleoplasm. Its function is as follows. Involved in the regulation of apoptosis versus cell survival, and in the maintenance of viability but not of proliferation. Mediates its effects by interactions with a number of other regulators of apoptosis. The protein is Induced myeloid leukemia cell differentiation protein Mcl-1 homolog (MCL1) of Felis catus (Cat).